Consider the following 227-residue polypeptide: Venom allergen 5.01 (227 aa).

The N-terminal stretch at 1–23 is a signal peptide; sequence MEIGGLVYLILIITIINLSFGET. Disulfide bonds link cysteine 27–cysteine 39, cysteine 31–cysteine 124, cysteine 49–cysteine 117, and cysteine 193–cysteine 210. In terms of domain architecture, SCP spans 68-212; it reads LKRHNDFRQN…WYTHYLVCNY (145 aa).

This sequence belongs to the CRISP family. Venom allergen 5-like subfamily. Expressed by the venom gland.

The protein resides in the secreted. This is Venom allergen 5.01 from Dolichovespula maculata (Bald-faced hornet).